A 316-amino-acid polypeptide reads, in one-letter code: Conjugated bile acid hydrolase (316 aa).

Residue Cys2 is the Nucleophile of the active site. 2 residues coordinate deoxycholate: Cys2 and Arg18. Taurine is bound at residue Asn81.

Belongs to the peptidase C59 family.

It catalyses the reaction cholate + taurine = taurocholate + H2O. The enzyme catalyses taurochenodeoxycholate + H2O = chenodeoxycholate + taurine. The catalysed reaction is taurodeoxycholate + H2O = deoxycholate + taurine. It carries out the reaction glycocholate + H2O = cholate + glycine. It catalyses the reaction glycodeoxycholate + H2O = deoxycholate + glycine. It participates in lipid metabolism; bile acid biosynthesis. Bile salt hydrolase that catalyzes the deconjugation of glycine- and taurine-linked bile salts, which occurs naturally in the intestines of humans, releasing amino acid residues and deconjugated bile salts (bile acids). Can hydrolyze the amide bond in the bile salts taurocholate (TCA), taurodeoxycholate (TDCA), taurochenodeoxycholate (TCDCA), glycocholate (GCA) and glycodeoxycholate (GDCA). Shows highest activity toward the taurine-conjugated bile salts TCA and TCDCA. The activity toward the other three substrates (TDCA, GCA and GDCA) is relatively low. This enzyme likely contributes to bile salt resistance of the strain and may be associated with survival capability of strain JCM1131 within the human intestine by bile detoxification. This is Conjugated bile acid hydrolase from Lactobacillus gasseri (strain ATCC 33323 / DSM 20243 / BCRC 14619 / CIP 102991 / JCM 1131 / KCTC 3163 / NCIMB 11718 / NCTC 13722 / AM63).